A 276-amino-acid polypeptide reads, in one-letter code: Homeobox-leucine zipper protein HOX11 (276 aa).

The tract at residues 1-92 (MVDGHLEAST…DDGGSARKKL (92 aa)) is disordered. Residues 39–48 (LSSSPNNSAG) are compositionally biased toward polar residues. The segment covering 58 to 73 (HGLGGNDAAPGGGGGD) has biased composition (gly residues). The homeobox DNA-binding region spans 87–146 (SARKKLRLSKEQSAFLEESFKEHSTLNPKQKLALAKQLNLRPRQVEVWFQNRRARTKLKQ). A leucine-zipper region spans residues 145 to 189 (KQTEVDCEYLKRCCETLTEENRRLQKELAELRALKTVHPFYMHLP). Residues 214–244 (AATSSTAAPPAAPSSGGIAATSSSSAAAAAA) form a disordered region.

It belongs to the HD-ZIP homeobox family. Class II subfamily. In terms of tissue distribution, expressed in stems, leaf sheaths and blades and panicles.

The protein resides in the nucleus. Probable transcription factor. This is Homeobox-leucine zipper protein HOX11 (HOX11) from Oryza sativa subsp. indica (Rice).